Here is a 303-residue protein sequence, read N- to C-terminus: Probable endonuclease 4 (303 aa).

Zn(2+) contacts are provided by His-75, His-115, Glu-151, Asp-185, His-188, His-221, Asp-234, His-236, and Glu-266.

The protein belongs to the AP endonuclease 2 family. Requires Zn(2+) as cofactor.

It catalyses the reaction Endonucleolytic cleavage to 5'-phosphooligonucleotide end-products.. Endonuclease IV plays a role in DNA repair. It cleaves phosphodiester bonds at apurinic or apyrimidinic (AP) sites, generating a 3'-hydroxyl group and a 5'-terminal sugar phosphate. The chain is Probable endonuclease 4 from Ureaplasma parvum serovar 3 (strain ATCC 700970).